The sequence spans 185 residues: MSPFAVVLLAFSMSVDAFAVSVGRGAALGRPRYSEALRSGAVFGVVEAITPVIGWVAGVAASSFVQAVDHWLAFGLLAAVGLHMLYAAVWKKADAKPVGRSFTVLMATAIGTSLDAMAVGVSLAFLNVNIVVVATAIGLATFLMSSGGMLIGRLIGEHFGRIAEAVAGIALFGLGLSILIEHLTA.

A run of 6 helical transmembrane segments spans residues 3 to 23 (PFAV…VSVG), 41 to 61 (AVFG…GVAA), 70 to 90 (HWLA…AAVW), 101 to 121 (SFTV…AVGV), 123 to 143 (LAFL…ATFL), and 165 to 185 (AVAG…HLTA).

This sequence belongs to the MntP (TC 9.B.29) family.

The protein localises to the cell inner membrane. Functionally, probably functions as a manganese efflux pump. The protein is Putative manganese efflux pump MntP of Bradyrhizobium sp. (strain BTAi1 / ATCC BAA-1182).